The following is a 553-amino-acid chain: Cytokine-like nuclear factor N-PAC (553 aa).

In terms of domain architecture, PWWP spans 8-66; the sequence is LGDLVWGKLGRYPPWPGKIVNPPKDLKKPRGKKCFFVKFFGTEDHAWIKVEQLKPYHAH. Basic and acidic residues-rich tracts occupy residues 92 to 145 and 162 to 182; these read RAKG…EGKK and RAQEQSPRKRGRPPKDEKDLT. The interval 92 to 188 is disordered; sequence RAKGKDQTSS…KDLTIPESST (97 aa). Serine 130 carries the phosphoserine modification. Lysine 135 is covalently cross-linked (Glycyl lysine isopeptide (Lys-Gly) (interchain with G-Cter in SUMO2)). At serine 167 the chain carries Phosphoserine. The segment at residues 168 to 180 is a DNA-binding region (a.T hook); it reads PRKRGRPPKDEKD. Glycyl lysine isopeptide (Lys-Gly) (interchain with G-Cter in SUMO2) cross-links involve residues lysine 176, lysine 179, lysine 201, and lysine 211. The interaction with histone H3 stretch occupies residues 214–217; it reads DPHF. An interaction with KDM1B region spans residues 216-225; it reads HFHHFLLSQT. Glycyl lysine isopeptide (Lys-Gly) (interchain with G-Cter in SUMO2) cross-links involve residues lysine 227, lysine 237, lysine 240, and lysine 269. The segment at 261–553 is dehydrogenase domain; the sequence is GSITPTDKKI…MSAVYRAYIH (293 aa). 271–285 contacts NAD(+); that stretch reads GFLGLGLMGSGIVSN. A Glycyl lysine isopeptide (Lys-Gly) (interchain with G-Cter in SUMO2) cross-link involves residue lysine 302. NAD(+)-binding residues include threonine 362 and lysine 505. Residue serine 540 is modified to Phosphoserine.

The protein belongs to the HIBADH-related family. NP60 subfamily. Homotetramere. Interacts with MAPK14. Interacts with KDM1B at nucleosomes; this interaction stimulates H3K4me1 and H3K4me2 demethylation. Binds to mononucleosomes. Interacts with GATA4; the interaction is required for a synergistic activation of GATA4 target genes transcription.

It is found in the nucleus. It localises to the chromosome. Its function is as follows. Cytokine-like nuclear factor with chromatin gene reader activity involved in chromatin modification and regulation of gene expression. Acts as a nucleosome-destabilizing factor that is recruited to genes during transcriptional activation. Recognizes and binds histone H3 without a preference for specific epigenetic markers and also binds DNA. Interacts with KDM1B and promotes its histone demethylase activity by facilitating the capture of H3 tails, they form a multifunctional enzyme complex that modifies transcribed chromatin and facilitates Pol II transcription through nucleosomes. Stimulates the acetylation of 'Lys-56' of nucleosomal histone H3 (H3K56ac) by EP300. With GATA4, co-binds a defined set of heart development genes and coregulates their expression during cardiomyocyte differentiation. Regulates p38 MAP kinase activity by mediating stress activation of MAPK14/p38alpha and specifically regulating MAPK14 signaling. Indirectly promotes phosphorylation of MAPK14 and activation of ATF2. The phosphorylation of MAPK14 requires upstream activity of MAP2K4 and MAP2K6. This Homo sapiens (Human) protein is Cytokine-like nuclear factor N-PAC.